The primary structure comprises 251 residues: Astacin (251 aa).

An N-terminal signal peptide occupies residues 1–15; it reads MQCAVLLVLLGVVAA. A propeptide spans 16 to 49 (activation peptide); the sequence is SPIIPEAARALYYNDGMFEGDIKLRAGRQPARVG. In terms of domain architecture, Peptidase M12A spans 50–248; it reads AAILGDEYLW…INNLYTNECS (199 aa). 2 disulfides stabilise this stretch: cysteine 91–cysteine 247 and cysteine 113–cysteine 133. Histidine 141 provides a ligand contact to Zn(2+). Residue glutamate 142 is part of the active site. Zn(2+) is bound by residues histidine 145 and histidine 151. The propeptide occupies 250–251; the sequence is RH.

Monomer. It depends on Zn(2+) as a cofactor.

The enzyme catalyses Hydrolysis of peptide bonds in substrates containing five or more amino acids, preferentially with Ala in P1', and Pro in P2'.. In terms of biological role, metalloprotease. This protease prefers to cleave in front of small aliphatic residues (P1'). The presence of Lys or Arg in the P1 and P2 position yields high-turnover substrates. In the P3 position the enzyme prefers Pro &gt; Val &gt; Leu &gt; Ala &gt; Gly. The protein is Astacin of Astacus astacus (Noble crayfish).